Reading from the N-terminus, the 417-residue chain is Zinc finger protein CONSTANS-LIKE 16 (417 aa).

4 residues coordinate Zn(2+): Cys17, Cys20, Cys40, and His45. The B box-type; atypical zinc-finger motif lies at 17 to 59 (CDSCVKRRARWYCAADDAFLCQSCDSLVHSANPLARRHERVRL). The segment at 63-105 (SPAVVKHSNHSSASPPHEVATWHHGFTRKARTPRGSGKKNNSS) is disordered. A coiled-coil region spans residues 212–239 (LSNSEMFKIEKDEIEEEVEEIKAMSMDI). One can recognise a CCT domain in the interval 361 to 403 (REARVSRYREKRRTRLFSKKIRYEVRKLNAEKRPRMKGRFVKR).

The protein belongs to the CONSTANS family.

It is found in the nucleus. The sequence is that of Zinc finger protein CONSTANS-LIKE 16 (COL16) from Arabidopsis thaliana (Mouse-ear cress).